A 141-amino-acid polypeptide reads, in one-letter code: 3-hydroxyacyl-[acyl-carrier-protein] dehydratase FabZ (141 aa).

The active site involves H48.

The protein belongs to the thioester dehydratase family. FabZ subfamily.

It localises to the cytoplasm. The enzyme catalyses a (3R)-hydroxyacyl-[ACP] = a (2E)-enoyl-[ACP] + H2O. In terms of biological role, involved in unsaturated fatty acids biosynthesis. Catalyzes the dehydration of short chain beta-hydroxyacyl-ACPs and long chain saturated and unsaturated beta-hydroxyacyl-ACPs. This chain is 3-hydroxyacyl-[acyl-carrier-protein] dehydratase FabZ, found in Streptococcus thermophilus (strain CNRZ 1066).